We begin with the raw amino-acid sequence, 213 residues long: MKLTLVQFFFMMLLLLLGLGVGLGLGLQMAAAVLEESDQLLSEFQSSDSQDKTQATKKGAGTRTMETLLLSDNVVMQPEETILSEDEVGGNKMLRAQAFSQSYPNYLRSDLMDRECNTLMAKKMKPYNHTCISQYIFIHEEPDEIKAVCKSPPVACELKGGKCHKSARPFDLTFCKLSKPGQVTPHCNYVTFLLEKHILISCNDMKVQVMSGS.

The signal sequence occupies residues 1 to 24; it reads MKLTLVQFFFMMLLLLLGLGVGLG. Asn128 carries an N-linked (GlcNAc...) asparagine glycan.

It belongs to the pancreatic ribonuclease family. The N-terminus is blocked. Glycosylated. Male-specific expression in proximal caput of the epididymis.

The protein localises to the secreted. Secreted proximal epididymal protein required for post-testicular sperm maturation and male fertility. May be involved in sperm adhesion to the egg zona pellucida. Does not have ribonuclease activity. The sequence is that of Inactive ribonuclease-like protein 10 (RNASE10) from Sus scrofa (Pig).